A 239-amino-acid polypeptide reads, in one-letter code: Leucine-rich repeat-containing protein 57 (239 aa).

Gly-2 is lipidated: N-myristoyl glycine. LRR repeat units follow at residues 39–60, 63–84, 86–107, 109–131, 132–153, 154–175, 177–197, and 202–222; these read NLRT…LIGK, LLKS…ICNL, KLET…FGQL, ALKT…CSLR, HLDV…VGEL, QVIE…ISCC, RLKI…PQSI, and QICL…RELE.

The protein resides in the membrane. This is Leucine-rich repeat-containing protein 57 (LRRC57) from Homo sapiens (Human).